A 153-amino-acid polypeptide reads, in one-letter code: Putative nuclear shuttle protein (153 aa).

Belongs to the nanoviridae nuclear shuttle protein family.

It is found in the host nucleus. It localises to the host cytoplasm. Functionally, putative nuclear shuttle protein. This is Putative nuclear shuttle protein (DNA-N) from Faba bean necrotic yellows virus (isolate Syrian SV292-88) (FBNYV).